The primary structure comprises 591 residues: Probable translation initiation factor IF-2 (591 aa).

Positions 6–220 (IRTPIVCVMG…IMIGLAQRYM (215 aa)) constitute a tr-type G domain. Positions 15–22 (GHVDHGKT) are G1. 15 to 22 (GHVDHGKT) provides a ligand contact to GTP. Positions 40-44 (AITQH) are G2. Residues 76–79 (DTPG) form a G3 region. GTP contacts are provided by residues 76–80 (DTPGH) and 130–133 (TKVD). The G4 stretch occupies residues 130–133 (TKVD). The G5 stretch occupies residues 198–200 (SAH).

The protein belongs to the TRAFAC class translation factor GTPase superfamily. Classic translation factor GTPase family. IF-2 subfamily.

Function in general translation initiation by promoting the binding of the formylmethionine-tRNA to ribosomes. Seems to function along with eIF-2. This is Probable translation initiation factor IF-2 from Methanoregula boonei (strain DSM 21154 / JCM 14090 / 6A8).